An 88-amino-acid polypeptide reads, in one-letter code: Small ribosomal subunit protein uS17 (88 aa).

This sequence belongs to the universal ribosomal protein uS17 family. In terms of assembly, part of the 30S ribosomal subunit.

In terms of biological role, one of the primary rRNA binding proteins, it binds specifically to the 5'-end of 16S ribosomal RNA. The polypeptide is Small ribosomal subunit protein uS17 (Prochlorococcus marinus subsp. pastoris (strain CCMP1986 / NIES-2087 / MED4)).